A 256-amino-acid polypeptide reads, in one-letter code: Protein LIKE COV 1 (256 aa).

Positions 1–10 (MANRERDREL) are enriched in basic and acidic residues. A disordered region spans residues 1–39 (MANRERDRELLIPVADFGDKDDGSSSKPSSSSSASSSHQ). Residues 1–60 (MANRERDRELLIPVADFGDKDDGSSSKPSSSSSASSSHQSGHETLSLFIRGWASKKFMTG) lie on the Cytoplasmic side of the membrane. Over residues 25–39 (SSKPSSSSSASSSHQ) the composition is skewed to low complexity. The chain crosses the membrane as a helical span at residues 61-81 (CVILLPIAVTFYTTWWFIHFV). The Extracellular portion of the chain corresponds to 82 to 93 (DGFFSPIYALLG). The helical transmembrane segment at 94 to 114 (INIFGFGFLTSIAFIFLVGVF) threads the bilayer. Topologically, residues 115–256 (MSSWLGASVL…KPLASIGNES (142 aa)) are cytoplasmic.

The protein belongs to the plant COV1 protein family. As to expression, expressed at low levels in flowers, stems, roots and leaves.

It localises to the membrane. This is Protein LIKE COV 1 from Arabidopsis thaliana (Mouse-ear cress).